The primary structure comprises 458 residues: N-acetylgalactosamine kinase (458 aa).

The alpha-D-galactose site is built by arginine 43, glutamate 49, histidine 50, and aspartate 52. ATP is bound by residues glycine 143, serine 145, and serine 146. Aspartate 190 serves as a coordination point for alpha-D-galactose. Aspartate 190 (proton acceptor) is an active-site residue. Positions 233 and 234 each coordinate ATP.

The protein belongs to the GHMP kinase family. GalK subfamily. In terms of assembly, monomer.

It carries out the reaction N-acetyl-alpha-D-galactosamine + ATP = N-acetyl-alpha-D-galactosamine 1-phosphate + ADP + H(+). In terms of biological role, acts on GalNAc. Also acts as a galactokinase when galactose is present at high concentrations. May be involved in a salvage pathway for the reutilization of free GalNAc derived from the degradation of complex carbohydrates. This Homo sapiens (Human) protein is N-acetylgalactosamine kinase (GALK2).